Reading from the N-terminus, the 435-residue chain is Light-independent protochlorophyllide reductase subunit N (435 aa).

[4Fe-4S] cluster-binding residues include Cys-23, Cys-48, and Cys-108.

It belongs to the BchN/ChlN family. In terms of assembly, protochlorophyllide reductase is composed of three subunits; ChlL, ChlN and ChlB. Forms a heterotetramer of two ChlB and two ChlN subunits. It depends on [4Fe-4S] cluster as a cofactor.

The protein resides in the plastid. Its subcellular location is the chloroplast. The catalysed reaction is chlorophyllide a + oxidized 2[4Fe-4S]-[ferredoxin] + 2 ADP + 2 phosphate = protochlorophyllide a + reduced 2[4Fe-4S]-[ferredoxin] + 2 ATP + 2 H2O. It functions in the pathway porphyrin-containing compound metabolism; chlorophyll biosynthesis (light-independent). Component of the dark-operative protochlorophyllide reductase (DPOR) that uses Mg-ATP and reduced ferredoxin to reduce ring D of protochlorophyllide (Pchlide) to form chlorophyllide a (Chlide). This reaction is light-independent. The NB-protein (ChlN-ChlB) is the catalytic component of the complex. The protein is Light-independent protochlorophyllide reductase subunit N of Chlorella vulgaris (Green alga).